The following is a 554-amino-acid chain: Urocanate hydratase (554 aa).

NAD(+) contacts are provided by residues 51-52 (GG), Gln129, 175-177 (GMG), Glu195, Arg200, 241-242 (NA), 262-266 (QTSAH), 272-273 (YL), and Tyr321. Cys409 is an active-site residue. Residue Gly491 participates in NAD(+) binding.

It belongs to the urocanase family. NAD(+) serves as cofactor.

It localises to the cytoplasm. It catalyses the reaction 4-imidazolone-5-propanoate = trans-urocanate + H2O. The protein operates within amino-acid degradation; L-histidine degradation into L-glutamate; N-formimidoyl-L-glutamate from L-histidine: step 2/3. Functionally, catalyzes the conversion of urocanate to 4-imidazolone-5-propionate. This Caulobacter sp. (strain K31) protein is Urocanate hydratase.